A 533-amino-acid polypeptide reads, in one-letter code: (E)-beta-farnesene synthase (533 aa).

Aspartate 286, aspartate 290, asparagine 430, serine 434, and glutamate 438 together coordinate Mg(2+). Residues 286–290 (DDMMD) carry the DDXXD motif motif.

It belongs to the terpene synthase family. The cofactor is Mg(2+). It depends on Co(2+) as a cofactor. Requires Mn(2+) as cofactor.

The protein resides in the cytoplasm. The catalysed reaction is (2E,6E)-farnesyl diphosphate = (E)-beta-farnesene + diphosphate. Its pathway is secondary metabolite biosynthesis; terpenoid biosynthesis. Sesquiterpene cyclase catalyzing the production of beta-farnesene and alpha-bergamotene in equal amounts from farnesyl diphosphate. Involved in indirect defense by producing volatile signals attracting natural enemies of herbivores. The polypeptide is (E)-beta-farnesene synthase (Zea mays subsp. huehuetenangensis (San Antonio Huista teosinte)).